The sequence spans 447 residues: Glutamate-1-semialdehyde 2,1-aminomutase (447 aa).

Lys-277 is modified (N6-(pyridoxal phosphate)lysine).

It belongs to the class-III pyridoxal-phosphate-dependent aminotransferase family. HemL subfamily. As to quaternary structure, homodimer. Pyridoxal 5'-phosphate is required as a cofactor.

It is found in the cytoplasm. It catalyses the reaction (S)-4-amino-5-oxopentanoate = 5-aminolevulinate. Its pathway is porphyrin-containing compound metabolism; protoporphyrin-IX biosynthesis; 5-aminolevulinate from L-glutamyl-tRNA(Glu): step 2/2. The chain is Glutamate-1-semialdehyde 2,1-aminomutase from Arthrobacter sp. (strain FB24).